Reading from the N-terminus, the 338-residue chain is Ornithine carbamoyltransferase, catabolic (338 aa).

Residues 58-61 (STRT), glutamine 85, arginine 109, and 136-139 (HPTQ) each bind carbamoyl phosphate. L-ornithine contacts are provided by residues asparagine 168, aspartate 232, and 236–237 (SM). Residues 273–274 (CL) and arginine 318 each bind carbamoyl phosphate.

This sequence belongs to the aspartate/ornithine carbamoyltransferase superfamily. OTCase family.

It is found in the cytoplasm. It catalyses the reaction carbamoyl phosphate + L-ornithine = L-citrulline + phosphate + H(+). The protein operates within amino-acid degradation; L-arginine degradation via ADI pathway; carbamoyl phosphate from L-arginine: step 2/2. Functionally, reversibly catalyzes the transfer of the carbamoyl group from carbamoyl phosphate (CP) to the N(epsilon) atom of ornithine (ORN) to produce L-citrulline. This chain is Ornithine carbamoyltransferase, catabolic, found in Streptococcus pneumoniae serotype 4 (strain ATCC BAA-334 / TIGR4).